The sequence spans 129 residues: Serum amyloid A protein (129 aa).

The signal sequence occupies residues 1 to 18 (MKLFPGLLFCSLVLGVSG). At Gln19 the chain carries Pyrrolidone carboxylic acid. The interval 92–129 (GDSGHGAEDSKADQAANEWGRSGKDPNHFRPAGLPDKY) is disordered. The propeptide at 112-129 (RSGKDPNHFRPAGLPDKY) is often cleaved during amyloidogenesis.

This sequence belongs to the SAA family. In terms of processing, this protein is the precursor of amyloid protein A, which is formed by the removal of residues from the C-terminal end. As to expression, expressed by the liver; secreted in plasma.

The protein localises to the secreted. Its function is as follows. Major acute phase reactant. Apolipoprotein of the HDL complex. The chain is Serum amyloid A protein (SAA1) from Canis lupus familiaris (Dog).